The following is a 155-amino-acid chain: Ribonuclease H (155 aa).

Residues 7-150 (AQNAVDLYTD…ADKLACKGRD (144 aa)) form the RNase H type-1 domain. Mg(2+)-binding residues include Asp-16, Glu-54, Asp-77, and Asp-142.

It belongs to the RNase H family. Monomer. Requires Mg(2+) as cofactor.

The protein localises to the cytoplasm. It catalyses the reaction Endonucleolytic cleavage to 5'-phosphomonoester.. Endonuclease that specifically degrades the RNA of RNA-DNA hybrids. In Saccharopolyspora erythraea (strain ATCC 11635 / DSM 40517 / JCM 4748 / NBRC 13426 / NCIMB 8594 / NRRL 2338), this protein is Ribonuclease H.